The following is a 292-amino-acid chain: Glycine--tRNA ligase alpha subunit (292 aa).

Belongs to the class-II aminoacyl-tRNA synthetase family. As to quaternary structure, tetramer of two alpha and two beta subunits.

The protein localises to the cytoplasm. The catalysed reaction is tRNA(Gly) + glycine + ATP = glycyl-tRNA(Gly) + AMP + diphosphate. This Synechococcus elongatus (strain ATCC 33912 / PCC 7942 / FACHB-805) (Anacystis nidulans R2) protein is Glycine--tRNA ligase alpha subunit.